Here is a 627-residue protein sequence, read N- to C-terminus: Putative polyketide hydroxylase (627 aa).

FAD-binding positions include 22-51 and 309-319; these read PVLV…LVER and YRSGRVLLAGD. Positions 370-469 are disordered; that stretch reads AEATSARAAH…GGGPGGGGPQ (100 aa). The segment covering 395–469 has biased composition (gly residues); sequence AGGGGPGAGT…GGGPGGGGPQ (75 aa).

Belongs to the PheA/TfdB FAD monooxygenase family. Requires FAD as cofactor.

Involved in developmentally regulated synthesis of a compound biosynthetically related to polyketide antibiotics which is essential for spore color in Streptococcus coelicolor. This Streptomyces coelicolor (strain ATCC BAA-471 / A3(2) / M145) protein is Putative polyketide hydroxylase.